The sequence spans 301 residues: Fluoroquinolones export ATP-binding protein MT2762 (301 aa).

The region spanning 18–246 (IRVRGLTFRY…RSRRRVRVEY (229 aa)) is the ABC transporter domain. 52-59 (GPSGAGKS) contacts ATP.

Belongs to the ABC transporter superfamily. As to quaternary structure, the complex is composed of 2 ATP-binding proteins and 2 transmembrane proteins.

It is found in the cell membrane. Its function is as follows. Part of the ABC transporter complex involved in fluoroquinolones export. Probably responsible for energy coupling to the transport system. In Mycobacterium tuberculosis (strain CDC 1551 / Oshkosh), this protein is Fluoroquinolones export ATP-binding protein MT2762.